The chain runs to 94 residues: Translation initiation factor IF-1 (94 aa).

Positions 1-72 (MAKEELIQFE…EKGRLIFRHK (72 aa)) constitute an S1-like domain. A disordered region spans residues 71 to 94 (HKDERPGGTGAPRGAPPRGQFRRR). Positions 82-94 (PRGAPPRGQFRRR) are enriched in low complexity.

It belongs to the IF-1 family. Component of the 30S ribosomal translation pre-initiation complex which assembles on the 30S ribosome in the order IF-2 and IF-3, IF-1 and N-formylmethionyl-tRNA(fMet); mRNA recruitment can occur at any time during PIC assembly.

The protein resides in the cytoplasm. In terms of biological role, one of the essential components for the initiation of protein synthesis. Stabilizes the binding of IF-2 and IF-3 on the 30S subunit to which N-formylmethionyl-tRNA(fMet) subsequently binds. Helps modulate mRNA selection, yielding the 30S pre-initiation complex (PIC). Upon addition of the 50S ribosomal subunit IF-1, IF-2 and IF-3 are released leaving the mature 70S translation initiation complex. The protein is Translation initiation factor IF-1 of Rhodopseudomonas palustris (strain BisB5).